The following is a 214-amino-acid chain: Glycerol-3-phosphate acyltransferase (214 aa).

Transmembrane regions (helical) follow at residues 4 to 24 (LIVA…IVSA), 52 to 72 (AAIL…WFVV), 82 to 102 (ETSV…PVFF), 118 to 138 (LAIN…VAFF), and 159 to 179 (FLFG…LLVW).

The protein belongs to the PlsY family. In terms of assembly, probably interacts with PlsX.

Its subcellular location is the cell inner membrane. It catalyses the reaction an acyl phosphate + sn-glycerol 3-phosphate = a 1-acyl-sn-glycero-3-phosphate + phosphate. The protein operates within lipid metabolism; phospholipid metabolism. Its function is as follows. Catalyzes the transfer of an acyl group from acyl-phosphate (acyl-PO(4)) to glycerol-3-phosphate (G3P) to form lysophosphatidic acid (LPA). This enzyme utilizes acyl-phosphate as fatty acyl donor, but not acyl-CoA or acyl-ACP. This chain is Glycerol-3-phosphate acyltransferase, found in Paraburkholderia phytofirmans (strain DSM 17436 / LMG 22146 / PsJN) (Burkholderia phytofirmans).